A 510-amino-acid polypeptide reads, in one-letter code: NAD(P)H-quinone oxidoreductase subunit 2 B, chloroplastic (510 aa).

The next 13 membrane-spanning stretches (helical) occupy residues 24–44, 57–77, 99–119, 124–144, 149–169, 183–203, 227–247, 295–315, 323–343, 354–374, 395–415, 428–448, and 484–504; these read LLLFDGSFIFPECILIFGLIL, IPWFYFISSTSLVMSITALLF, IFQFLILLCSTLCIPLSVEYI, MAITEFLLFVLTATLGGMFLC, LITIFVAPECFSLCSYLLSGY, YLLMGGASSSILVHGFSWLYG, PGILIALLFITVGIGFKLSLA, WHLLLEILAILSMILGNLIAI, MLAYSSIGQIGYVIIGIIVGD, YMLFYISMNLGTFACIVLFGL, ALSLALCLLSLGGLPPLAGFF, GLYFLVSIGLLTSVISIYYYL, and MIVCVIASTIPGISMNPIIAI.

The protein belongs to the complex I subunit 2 family. In terms of assembly, NDH is composed of at least 16 different subunits, 5 of which are encoded in the nucleus.

It localises to the plastid. Its subcellular location is the chloroplast thylakoid membrane. It catalyses the reaction a plastoquinone + NADH + (n+1) H(+)(in) = a plastoquinol + NAD(+) + n H(+)(out). The enzyme catalyses a plastoquinone + NADPH + (n+1) H(+)(in) = a plastoquinol + NADP(+) + n H(+)(out). Functionally, NDH shuttles electrons from NAD(P)H:plastoquinone, via FMN and iron-sulfur (Fe-S) centers, to quinones in the photosynthetic chain and possibly in a chloroplast respiratory chain. The immediate electron acceptor for the enzyme in this species is believed to be plastoquinone. Couples the redox reaction to proton translocation, and thus conserves the redox energy in a proton gradient. The chain is NAD(P)H-quinone oxidoreductase subunit 2 B, chloroplastic from Eucalyptus globulus subsp. globulus (Tasmanian blue gum).